Consider the following 428-residue polypeptide: Trigger factor (428 aa).

One can recognise a PPIase FKBP-type domain in the interval 163 to 248; it reads GDTAVIDFEG…INEVKAKELP (86 aa).

This sequence belongs to the FKBP-type PPIase family. Tig subfamily.

It is found in the cytoplasm. The catalysed reaction is [protein]-peptidylproline (omega=180) = [protein]-peptidylproline (omega=0). Its function is as follows. Involved in protein export. Acts as a chaperone by maintaining the newly synthesized protein in an open conformation. Functions as a peptidyl-prolyl cis-trans isomerase. This is Trigger factor from Oceanobacillus iheyensis (strain DSM 14371 / CIP 107618 / JCM 11309 / KCTC 3954 / HTE831).